Reading from the N-terminus, the 32-residue chain is Kappa-conotoxin SrXIA (32 aa).

Cystine bridges form between Cys-1/Cys-15, Cys-8/Cys-20, Cys-14/Cys-24, and Cys-19/Cys-28. A 4-carboxyglutamate mark is found at Glu-9 and Glu-10. Pro-32 is modified (proline amide).

This sequence belongs to the conotoxin I2 superfamily. In terms of tissue distribution, expressed by the venom duct.

It is found in the secreted. Its function is as follows. Kappa-conotoxins bind and inhibit voltage-gated potassium channels. This toxin inhibits Kv1.2/KCNA2 and Kv1.6/KCNA6. Produces stiffening of body, limbs and tail when injected intracranially into mice. The protein is Kappa-conotoxin SrXIA of Conus spurius (Alphabet cone).